The following is a 142-amino-acid chain: Hemoglobin subunit alpha (142 aa).

Residues 2 to 142 (VLSPADKSNV…VSTVLTSKYR (141 aa)) enclose the Globin domain. A Phosphoserine modification is found at Ser-4. N6-succinyllysine is present on residues Lys-8 and Lys-12. Position 17 is an N6-acetyllysine; alternate (Lys-17). At Lys-17 the chain carries N6-succinyllysine; alternate. Tyr-25 is modified (phosphotyrosine). Ser-36 is subject to Phosphoserine. Lys-41 bears the N6-succinyllysine mark. Ser-50 bears the Phosphoserine mark. His-59 is a binding site for O2. Position 88 (His-88) interacts with heme b. Residue Ser-103 is modified to Phosphoserine. Residue Thr-109 is modified to Phosphothreonine. A phosphoserine mark is found at Ser-125 and Ser-132. Phosphothreonine occurs at positions 135 and 138. Ser-139 is subject to Phosphoserine.

Belongs to the globin family. Heterotetramer of two alpha chains and two beta chains. As to expression, red blood cells.

Its function is as follows. Involved in oxygen transport from the lung to the various peripheral tissues. Hemopressin acts as an antagonist peptide of the cannabinoid receptor CNR1. Hemopressin-binding efficiently blocks cannabinoid receptor CNR1 and subsequent signaling. This Ateles geoffroyi (Black-handed spider monkey) protein is Hemoglobin subunit alpha (HBA).